The sequence spans 630 residues: GATA-type transcription factor SRE1 (630 aa).

2 disordered regions span residues 1-139 (MTGL…TPLW) and 162-203 (DRPT…RLTD). 3 stretches are compositionally biased toward polar residues: residues 66–82 (DNTQGDGSRNMDSQLQN), 115–133 (KAQSKEQAFTGHSCSNCGT), and 175–196 (YGSSSAQTLDKSRSSTSPTNDG). The GATA-type 1 zinc finger occupies 128 to 152 (CSNCGTKRTPLWRRSPTGATICNAC). Residues 219–237 (CPGGGSCNGTGGAEGCDGC) are cystein-rich region (CRR). A disordered region spans residues 256–283 (HTPRTSPQVSTQGGPGSTEGDAGSSNPE). Over residues 258 to 267 (PRTSPQVSTQ) the composition is skewed to polar residues. The GATA-type 2 zinc-finger motif lies at 291-315 (CQNCQTTVTPLWRRDENGHPICNAC). The interval 339–609 (KRVVPAMREQ…AKAERRARLQ (271 aa)) is disordered. Polar residues predominate over residues 349–363 (SPPSATQSSNGSVSP). Low complexity-rich tracts occupy residues 436-447 (NNHNNGETTNTH) and 492-503 (SSSSASFPNNNP). Positions 504–513 (GRFNSISSLL) are enriched in polar residues. The span at 558–568 (SHSPPRFSPSL) shows a compositional bias: low complexity. Positions 595–609 (VDHRDAKAERRARLQ) are enriched in basic and acidic residues. A coiled-coil region spans residues 595 to 630 (VDHRDAKAERRARLQREAQDMREALKAKERELALLE).

It localises to the nucleus. GATA-type transcription repressor that regulates iron- acquisition genes through specific binding the GATA sequence element 5'-(G/A)ATC(T/A)GATAA-3' of target promoters in an iron- and zinc-dependent manner. Regulation occurs via direct binding of iron ions. Iron acquisition regulation is critical for survival under both iron-limiting conditions (to acquire essential iron) and iron-replete conditions (to limit iron toxicity). SRE1 targets include genes encoding a number of key iron-regulated factors such as those involved in siderophore biosynthesis, presumed ferric reductase activity, iron-responsive transcriptional regulation, oxidative stress response, as well as genes encoding a number of putative oxidoreductases, metabolic and mitochondrial enzymes, superoxide dismutase, and genes previously identified as induced during nitrosative stress. In Ajellomyces capsulatus (Darling's disease fungus), this protein is GATA-type transcription factor SRE1.